The primary structure comprises 411 residues: Acetyl-coenzyme A carboxylase carboxyl transferase subunit beta, chloroplastic (411 aa).

Residues 32–302 (LWTRCDHCGV…KEQGRIPYGE (271 aa)) form the CoA carboxyltransferase N-terminal domain. The Zn(2+) site is built by cysteine 36, cysteine 39, cysteine 55, and cysteine 58. The C4-type zinc-finger motif lies at 36–58 (CDHCGVILYIKHLKENQRVCFGC).

Belongs to the AccD/PCCB family. Acetyl-CoA carboxylase is a heterohexamer composed of biotin carboxyl carrier protein, biotin carboxylase and 2 subunits each of ACCase subunit alpha and ACCase plastid-coded subunit beta (accD). It depends on Zn(2+) as a cofactor.

It is found in the plastid. It localises to the chloroplast stroma. The catalysed reaction is N(6)-carboxybiotinyl-L-lysyl-[protein] + acetyl-CoA = N(6)-biotinyl-L-lysyl-[protein] + malonyl-CoA. Its pathway is lipid metabolism; malonyl-CoA biosynthesis; malonyl-CoA from acetyl-CoA: step 1/1. Its function is as follows. Component of the acetyl coenzyme A carboxylase (ACC) complex. Biotin carboxylase (BC) catalyzes the carboxylation of biotin on its carrier protein (BCCP) and then the CO(2) group is transferred by the transcarboxylase to acetyl-CoA to form malonyl-CoA. This chain is Acetyl-coenzyme A carboxylase carboxyl transferase subunit beta, chloroplastic, found in Chlorella vulgaris (Green alga).